The following is a 231-amino-acid chain: Large ribosomal subunit protein uL1 (231 aa).

Belongs to the universal ribosomal protein uL1 family. As to quaternary structure, part of the 50S ribosomal subunit.

Binds directly to 23S rRNA. The L1 stalk is quite mobile in the ribosome, and is involved in E site tRNA release. Functionally, protein L1 is also a translational repressor protein, it controls the translation of the L11 operon by binding to its mRNA. The sequence is that of Large ribosomal subunit protein uL1 from Macrococcus caseolyticus (strain JCSC5402) (Macrococcoides caseolyticum).